Here is a 592-residue protein sequence, read N- to C-terminus: MAVSGFTLGTCILLLHISYVANYPNGKVTQSCHGMIPEHGHSPQSVPVHDIYVSQMTFRPGDQIEVTLSGHPFKGFLLEARNAEDLNGPPIGSFTLIDSEVSQLLTCEDIQGSAVSHRSASKKTEIKVYWNAPSSAPNHTQFLVTVVEKYKIYWVKIPGPIISQPNAFPFTTPKATVVPLPTLPPVSHLTKPFSASDCGNKKFCIRSPLNCDPEKEASCVFLSFTRDDQSVMVEMSGPSKGYLSFALSHDQWMGDDDAYLCIHEDQTVYIQPSHLTGRSHPVMDSRDTLEDMAWRLADGVMQCSFRRNITLPGVKNRFDLNTSYYIFLADGAANDGRIYKHSQQPLITYEKYDVTDSPKNIGGSHSVLLLKVHGALMFVAWMTTVSIGVLVARFFKPVWSKAFLLGEAAWFQVHRMLMFTTTVLTCIAFVMPFIYRGGWSRHAGYHPYLGCIVMTLAVLQPLLAVFRPPLHDPRRQMFNWTHWSMGTAARIIAVAAMFLGMDLPGLNLPDSWKTYAMTGFVAWHVGTEVVLEVHAYRLSRKVEILDDDRIQILQSFTAVETEGHAFKKAVLAIYVCGNVTFLIIFLSAINHL.

The chain crosses the membrane as a helical span at residues 2–22; it reads AVSGFTLGTCILLLHISYVAN. Positions 13-179 constitute a Reelin domain; it reads LLLHISYVAN…FTTPKATVVP (167 aa). Residues N138, N308, and N321 are each glycosylated (N-linked (GlcNAc...) asparagine). In terms of domain architecture, DOMON spans 216-331; the sequence is EASCVFLSFT…TSYYIFLADG (116 aa). Positions 335 to 534 constitute a Cytochrome b561 domain; sequence DGRIYKHSQQ…VGTEVVLEVH (200 aa). The chain crosses the membrane as a helical span at residues 372–392; that stretch reads VHGALMFVAWMTTVSIGVLVA. Heme b contacts are provided by H373 and H414. 2 helical membrane-spanning segments follow: residues 415 to 435 and 446 to 466; these read RMLM…PFIY and HPYL…LAVF. The heme b site is built by H446 and H482. 3 helical membrane-spanning segments follow: residues 491–511, 515–535, and 569–589; these read IIAV…LPDS, YAMT…EVHA, and AVLA…LSAI.

It belongs to the FRRS1 family. Requires heme b as cofactor.

The protein localises to the membrane. In terms of biological role, ferric-chelate reductases reduce Fe(3+) to Fe(2+) before its transport from the endosome to the cytoplasm. This Homo sapiens (Human) protein is Ferric-chelate reductase 1 (FRRS1).